A 319-amino-acid polypeptide reads, in one-letter code: MIFSTLEHILTHISFSIISIVITIFLISLSVDEIVGLYDSSEKGMTATFFCITGLLVTRWIYSGHFPLSDLYESLIFLSWSFSVIHMVPYFKKHKNYLSTITAPSTIFTQGFATSGLLTEMHQSEIVVPALQSQWLMMHVSMMILGYAALLCGSLLSVALLVITLRKAIRVFSKKNNFLNESFSFVEIQYMNERSNVLLTTSFCSSRNYYRAQLIQQLDQWSYRIISLGFLFLTIGILSGAVWANEAWGSYWNWDPKETWAFITWTLFAIYLHTRTNKNWESFNCAIVASIGFLIIWICYFGVNLLGIGLHSYGSFNLH.

A run of 8 helical transmembrane segments spans residues 9 to 29 (ILTH…LISL), 48 to 68 (TFFC…HFPL), 71 to 91 (LYES…VPYF), 98 to 118 (LSTI…SGLL), 143 to 163 (MILG…LLVI), 225 to 245 (IISL…VWAN), 258 to 275 (ETWA…LHTR), and 286 to 306 (AIVA…VNLL).

Belongs to the CcmF/CycK/Ccl1/NrfE/CcsA family. As to quaternary structure, may interact with Ccs1.

It is found in the plastid. The protein resides in the chloroplast thylakoid membrane. Required during biogenesis of c-type cytochromes (cytochrome c6 and cytochrome f) at the step of heme attachment. This chain is Cytochrome c biogenesis protein CcsA, found in Eucalyptus globulus subsp. globulus (Tasmanian blue gum).